The primary structure comprises 105 residues: Large ribosomal subunit protein eL30 (105 aa).

It belongs to the eukaryotic ribosomal protein eL30 family.

The chain is Large ribosomal subunit protein eL30 (RPL30) from Trypanosoma brucei brucei.